Here is a 387-residue protein sequence, read N- to C-terminus: GTPase Obg (387 aa).

An Obg domain is found at 1–159 (MKFLDEAKIY…MWVRLEMKLL (159 aa)). An OBG-type G domain is found at 160–334 (ADVGLVGMPN…LVYHVGGMVK (175 aa)). GTP-binding positions include 166 to 173 (GMPNAGKS), 191 to 195 (FTTLQ), 213 to 216 (DIPG), 283 to 286 (SKAD), and 315 to 317 (SSA). Residues S173 and T193 each contribute to the Mg(2+) site. Residues 347–379 (LEDAPTRAGSKALRDEHAPSWQDDDDDDDDDDG) are disordered. The span at 368–379 (QDDDDDDDDDDG) shows a compositional bias: acidic residues.

It belongs to the TRAFAC class OBG-HflX-like GTPase superfamily. OBG GTPase family. Monomer. Mg(2+) serves as cofactor.

The protein localises to the cytoplasm. Its function is as follows. An essential GTPase which binds GTP, GDP and possibly (p)ppGpp with moderate affinity, with high nucleotide exchange rates and a fairly low GTP hydrolysis rate. Plays a role in control of the cell cycle, stress response, ribosome biogenesis and in those bacteria that undergo differentiation, in morphogenesis control. The sequence is that of GTPase Obg from Magnetococcus marinus (strain ATCC BAA-1437 / JCM 17883 / MC-1).